The sequence spans 331 residues: Ornithine carbamoyltransferase (331 aa).

Carbamoyl phosphate-binding positions include 55-58, glutamine 82, arginine 106, and 133-136; these read STRT and HPTQ. Residues asparagine 166, aspartate 230, and 234-235 contribute to the L-ornithine site; that span reads SM. Carbamoyl phosphate-binding positions include 272-273 and arginine 317; that span reads CL.

This sequence belongs to the aspartate/ornithine carbamoyltransferase superfamily. OTCase family.

The protein localises to the cytoplasm. The enzyme catalyses carbamoyl phosphate + L-ornithine = L-citrulline + phosphate + H(+). It functions in the pathway amino-acid biosynthesis; L-arginine biosynthesis; L-arginine from L-ornithine and carbamoyl phosphate: step 1/3. In terms of biological role, reversibly catalyzes the transfer of the carbamoyl group from carbamoyl phosphate (CP) to the N(epsilon) atom of ornithine (ORN) to produce L-citrulline. The sequence is that of Ornithine carbamoyltransferase (argF) from Neisseria gonorrhoeae.